A 349-amino-acid polypeptide reads, in one-letter code: Cyclic amide hydrolase (349 aa).

An RU A region spans residues 1–90 (MTSPEDTAGV…AVFVDDPASS (90 aa)). R38 is a substrate binding site. The tract at residues 99–231 (GLSIGVTTTA…AAVLVMGNSP (133 aa)) is RU B. Residue K149 is part of the active site. Residues R176, 214–215 (SA), K311, and 330–331 (SG) contribute to the substrate site. Residue S214 is the Nucleophile of the active site. The RU C stretch occupies residues 237–349 (YRIGHGVLRD…GGGTVAVIAR (113 aa)).

It belongs to the cyclic amide hydrolase (CyAH) family. In terms of assembly, homotetramer.

Its function is as follows. Cyclic amide hydrolase of unknown substrate specificity. Catalyzes the hydrolytic ring-opening of a cyclic amide. Does not act on cyanuric acid nor barbituric acid. This Rhodococcus sp protein is Cyclic amide hydrolase.